Consider the following 126-residue polypeptide: MTAFVPDFGKAGGLVPAIAQDADTGEVLMMAWMNAEAFEMTLKTGEAHYFSRSRGRLWHKGGTSGHTQHIRAVRLDCDSDTILLLVEQRGGAACHEGYRSCFYREMKDGEVSICSPKVFDPKEVYK.

Asp76 lines the Mg(2+) pocket. Cys77 provides a ligand contact to Zn(2+). Asp78 and Asp80 together coordinate Mg(2+). Residues Cys94 and Cys101 each coordinate Zn(2+).

It belongs to the PRA-CH family. In terms of assembly, homodimer. Mg(2+) is required as a cofactor. Zn(2+) serves as cofactor.

It localises to the cytoplasm. It carries out the reaction 1-(5-phospho-beta-D-ribosyl)-5'-AMP + H2O = 1-(5-phospho-beta-D-ribosyl)-5-[(5-phospho-beta-D-ribosylamino)methylideneamino]imidazole-4-carboxamide. The protein operates within amino-acid biosynthesis; L-histidine biosynthesis; L-histidine from 5-phospho-alpha-D-ribose 1-diphosphate: step 3/9. Functionally, catalyzes the hydrolysis of the adenine ring of phosphoribosyl-AMP. The polypeptide is Phosphoribosyl-AMP cyclohydrolase (Nitratidesulfovibrio vulgaris (strain ATCC 29579 / DSM 644 / CCUG 34227 / NCIMB 8303 / VKM B-1760 / Hildenborough) (Desulfovibrio vulgaris)).